The following is a 485-amino-acid chain: Katanin p60 ATPase-containing subunit A1 (485 aa).

A disordered region spans residues 101–173 (HRSSPCVVRK…KNKAEAVETE (73 aa)). Residues 141–173 (NGDKGKPQKSKEKKENPSKPKEDKNKAEAVETE) show a composition bias toward basic and acidic residues. Residue 244-251 (GPPGTGKT) coordinates ATP.

It belongs to the AAA ATPase family. Katanin p60 subunit A1 subfamily. As to quaternary structure, can homooligomerize into hexameric rings, which may be promoted by interaction with microtubules. Interacts with katnb1, which may serve as a targeting subunit.

It localises to the cytoplasm. The protein resides in the cytoskeleton. Its subcellular location is the microtubule organizing center. It is found in the centrosome. The protein localises to the spindle pole. It localises to the spindle. It catalyses the reaction n ATP + n H2O + a microtubule = n ADP + n phosphate + (n+1) alpha/beta tubulin heterodimers.. Its activity is regulated as follows. ATPase activity is stimulated by microtubules, which promote homooligomerization. ATP-dependent microtubule severing is stimulated by interaction with katnb1. Functionally, catalytic subunit of a complex which severs microtubules in an ATP-dependent manner. Microtubule severing may promote rapid reorganization of cellular microtubule arrays and the release of microtubules from the centrosome following nucleation. The sequence is that of Katanin p60 ATPase-containing subunit A1 (katna1) from Danio rerio (Zebrafish).